Consider the following 311-residue polypeptide: Mitochondrial FAD carrier protein FLX1 (311 aa).

3 Solcar repeats span residues 7-101 (TPLQ…TKEL), 123-210 (MNSL…LKQR), and 224-310 (LTNL…LKHR). Helical transmembrane passes span 13–33 (VISGLSAGSVTTLVVHPLDLL), 77–97 (LSINLFGNAIAWGVYFGLYGV), 129–149 (LSAGASSGLMTAILTNPIWVI), 183–203 (LWKGLVPALFGVSQGALYFAV), 230–250 (IEITSLGKMVSVTLVYPFQLL), and 266–286 (LFPLIKLIIANDGFVGLYKGL).

This sequence belongs to the mitochondrial carrier (TC 2.A.29) family.

The protein resides in the mitochondrion inner membrane. Functionally, transport of FAD from the cytosol to the mitochondrial matrix. This chain is Mitochondrial FAD carrier protein FLX1 (FLX1), found in Saccharomyces cerevisiae (strain ATCC 204508 / S288c) (Baker's yeast).